The following is a 206-amino-acid chain: FMN-dependent NADH:quinone oxidoreductase 1 (206 aa).

FMN contacts are provided by residues Ser-9, 15–17 (SVS), and 139–142 (SRGG).

It belongs to the azoreductase type 1 family. As to quaternary structure, homodimer. FMN is required as a cofactor.

It catalyses the reaction 2 a quinone + NADH + H(+) = 2 a 1,4-benzosemiquinone + NAD(+). It carries out the reaction N,N-dimethyl-1,4-phenylenediamine + anthranilate + 2 NAD(+) = 2-(4-dimethylaminophenyl)diazenylbenzoate + 2 NADH + 2 H(+). Quinone reductase that provides resistance to thiol-specific stress caused by electrophilic quinones. Its function is as follows. Also exhibits azoreductase activity. Catalyzes the reductive cleavage of the azo bond in aromatic azo compounds to the corresponding amines. In Cupriavidus pinatubonensis (strain JMP 134 / LMG 1197) (Cupriavidus necator (strain JMP 134)), this protein is FMN-dependent NADH:quinone oxidoreductase 1.